The sequence spans 405 residues: Glutathione S-transferase LANCL1 (405 aa).

Cysteine 282 contributes to the Zn(2+) binding site. Position 323 (lysine 323) interacts with glutathione. Residues cysteine 328 and histidine 329 each contribute to the Zn(2+) site. 370–373 (RTPD) is a binding site for glutathione.

Belongs to the LanC-like protein family.

Its subcellular location is the cytoplasm. It is found in the cell membrane. It carries out the reaction RX + glutathione = an S-substituted glutathione + a halide anion + H(+). The enzyme catalyses 1-chloro-2,4-dinitrobenzene + glutathione = 2,4-dinitrophenyl-S-glutathione + chloride + H(+). Functions as a glutathione transferase. Catalyzes conjugation of the glutathione (GSH) to artificial substrates 1-chloro-2,4-dinitrobenzene (CDNB) and p-nitrophenyl acetate. Binds glutathione. This chain is Glutathione S-transferase LANCL1, found in Danio rerio (Zebrafish).